Here is a 401-residue protein sequence, read N- to C-terminus: Acetate kinase (401 aa).

Mg(2+) is bound at residue Asn-10. Lys-17 lines the ATP pocket. Arg-91 is a substrate binding site. The active-site Proton donor/acceptor is the Asp-150. ATP contacts are provided by residues 210–214, 285–287, and 333–337; these read HLGNG, DCR, and GIGEN. A Mg(2+)-binding site is contributed by Glu-387.

Belongs to the acetokinase family. Homodimer. The cofactor is Mg(2+). Mn(2+) is required as a cofactor.

Its subcellular location is the cytoplasm. The catalysed reaction is acetate + ATP = acetyl phosphate + ADP. Its pathway is metabolic intermediate biosynthesis; acetyl-CoA biosynthesis; acetyl-CoA from acetate: step 1/2. Functionally, catalyzes the formation of acetyl phosphate from acetate and ATP. Can also catalyze the reverse reaction. The protein is Acetate kinase of Pasteurella multocida (strain Pm70).